The primary structure comprises 434 residues: Cyclic 2,3-diphosphoglycerate synthetase (434 aa).

The protein belongs to the cyclic 2,3-diphosphoglycerate synthetase family.

It is found in the cytoplasm. It carries out the reaction (2R)-2,3-bisphosphoglycerate + ATP + H(+) = cyclic (2R)-2,3-bisphosphoglycerate + ADP + phosphate. Functionally, catalyzes the formation of cyclic 2,3-diphosphoglycerate (cDPG) by formation of an intramolecular phosphoanhydride bond at the expense of ATP. This chain is Cyclic 2,3-diphosphoglycerate synthetase, found in Thermococcus sibiricus (strain DSM 12597 / MM 739).